Here is a 1040-residue protein sequence, read N- to C-terminus: Multidrug resistance protein MdtB (1040 aa).

A run of 12 helical transmembrane segments spans residues F16–V36, D342–L362, I373–V393, L396–I416, I440–F460, F472–P492, W537–I557, S865–Y885, F888–A908, I911–V931, I968–V988, and G1002–F1022.

This sequence belongs to the resistance-nodulation-cell division (RND) (TC 2.A.6) family. MdtB subfamily. Part of a tripartite efflux system composed of MdtA, MdtB and MdtC. MdtB forms a heteromultimer with MdtC.

Its subcellular location is the cell inner membrane. The sequence is that of Multidrug resistance protein MdtB from Musicola paradisiaca (strain Ech703) (Dickeya paradisiaca).